Here is a 252-residue protein sequence, read N- to C-terminus: Pantothenate synthetase (252 aa).

An ATP-binding site is contributed by 29–36 (MGNLHAGH). Catalysis depends on histidine 36, which acts as the Proton donor. Glutamine 60 provides a ligand contact to (R)-pantoate. Glutamine 60 contributes to the beta-alanine binding site. 146–149 (GEKD) lines the ATP pocket. Residue glutamine 152 participates in (R)-pantoate binding. Residues valine 175 and 183 to 186 (CSSR) each bind ATP.

Belongs to the pantothenate synthetase family. Homodimer.

Its subcellular location is the cytoplasm. It catalyses the reaction (R)-pantoate + beta-alanine + ATP = (R)-pantothenate + AMP + diphosphate + H(+). Its pathway is cofactor biosynthesis; (R)-pantothenate biosynthesis; (R)-pantothenate from (R)-pantoate and beta-alanine: step 1/1. In terms of biological role, catalyzes the condensation of pantoate with beta-alanine in an ATP-dependent reaction via a pantoyl-adenylate intermediate. This is Pantothenate synthetase from Legionella pneumophila (strain Corby).